The primary structure comprises 525 residues: Beta-galactoside alpha-2,6-sialyltransferase 2 (525 aa).

Over 1 to 11 the chain is Cytoplasmic; sequence MKPHLKQWRQR. The helical; Signal-anchor for type II membrane protein transmembrane segment at 12–32 threads the bilayer; it reads MLFAIFVWGLLFLAIFIYFTN. Topologically, residues 33-525 are lumenal; it reads SNPAAPMPSS…PVTRPNNTNT (493 aa). 2 disordered regions span residues 85–107 and 145–183; these read SASP…DGFD and RQGA…PEEA. Disulfide bonds link Cys249–Cys515, Cys292–Cys444, and Cys462–Cys473. N-linked (GlcNAc...) asparagine glycosylation is found at Asn303 and Asn333. Asn521 is a glycosylation site (N-linked (GlcNAc...) asparagine).

It belongs to the glycosyltransferase 29 family.

The protein resides in the golgi apparatus. Its subcellular location is the golgi stack membrane. It catalyses the reaction a beta-D-galactoside + CMP-N-acetyl-beta-neuraminate = an N-acetyl-alpha-neuraminyl-(2-&gt;6)-beta-D-galactosyl derivative + CMP + H(+). In terms of biological role, transfers sialic acid from the donor of substrate CMP-sialic acid to galactose containing acceptor substrates. Has alpha-2,6-sialyltransferase activity toward oligosaccharides that have the Gal-beta-1,4-GlcNAc sequence at the non-reducing end of their carbohydrate groups, but it has weak or no activities toward glycoproteins and glycolipids. This is Beta-galactoside alpha-2,6-sialyltransferase 2 (St6gal2) from Rattus norvegicus (Rat).